Consider the following 170-residue polypeptide: Protein ECM34 (170 aa).

N-linked (GlcNAc...) asparagine glycosylation occurs at Asn-45. Helical transmembrane passes span 51–71 and 98–118; these read IWLLLCLTLIVGWKVFSGIGG and TIVILVISLAVSFSWEAFKMY.

It belongs to the DUP/COS family.

The protein localises to the membrane. May be involved in cell wall organization and biogenesis. The protein is Protein ECM34 (ECM34) of Saccharomyces cerevisiae (strain ATCC 204508 / S288c) (Baker's yeast).